The chain runs to 379 residues: Sterol 24-C-methyltransferase erg-4 (379 aa).

This sequence belongs to the class I-like SAM-binding methyltransferase superfamily. Erg6/SMT family.

It carries out the reaction lanosterol + S-adenosyl-L-methionine = eburicol + S-adenosyl-L-homocysteine + H(+). The protein operates within steroid metabolism; ergosterol biosynthesis. Functionally, catalyzes the methyl transfer from S-adenosyl-methionine to the C-24 of lanosterol to form eburicol. This chain is Sterol 24-C-methyltransferase erg-4, found in Neurospora crassa (strain ATCC 24698 / 74-OR23-1A / CBS 708.71 / DSM 1257 / FGSC 987).